Here is a 127-residue protein sequence, read N- to C-terminus: Small ribosomal subunit protein uS12m (127 aa).

Belongs to the universal ribosomal protein uS12 family.

Its subcellular location is the mitochondrion. Functionally, protein S12 is involved in the translation initiation step. The chain is Small ribosomal subunit protein uS12m (RPS12) from Chondrus crispus (Carrageen Irish moss).